A 400-amino-acid chain; its full sequence is S-adenosylmethionine synthase (400 aa).

Histidine 15 provides a ligand contact to ATP. Aspartate 17 is a Mg(2+) binding site. Glutamate 43 is a K(+) binding site. L-methionine contacts are provided by glutamate 56 and glutamine 99. A flexible loop region spans residues 99 to 109 (QSLEIGAGVDT). Residues 174–176 (DGK), aspartate 254, 260–261 (RK), alanine 277, and lysine 281 each bind ATP. Aspartate 254 contacts L-methionine. Position 285 (lysine 285) interacts with L-methionine.

Belongs to the AdoMet synthase family. In terms of assembly, homotetramer; dimer of dimers. Requires Mg(2+) as cofactor. The cofactor is K(+).

The protein resides in the cytoplasm. The catalysed reaction is L-methionine + ATP + H2O = S-adenosyl-L-methionine + phosphate + diphosphate. Its pathway is amino-acid biosynthesis; S-adenosyl-L-methionine biosynthesis; S-adenosyl-L-methionine from L-methionine: step 1/1. In terms of biological role, catalyzes the formation of S-adenosylmethionine (AdoMet) from methionine and ATP. The overall synthetic reaction is composed of two sequential steps, AdoMet formation and the subsequent tripolyphosphate hydrolysis which occurs prior to release of AdoMet from the enzyme. In Corynebacterium kroppenstedtii (strain DSM 44385 / JCM 11950 / CIP 105744 / CCUG 35717), this protein is S-adenosylmethionine synthase.